The following is a 416-amino-acid chain: Serine--tRNA ligase (416 aa).

Residue 232-234 (TAE) participates in L-serine binding. 263 to 265 (RKE) provides a ligand contact to ATP. L-serine is bound at residue glutamate 286. ATP is bound at residue 350 to 353 (EISS). Residue serine 384 coordinates L-serine.

The protein belongs to the class-II aminoacyl-tRNA synthetase family. Type-1 seryl-tRNA synthetase subfamily. As to quaternary structure, homodimer. The tRNA molecule binds across the dimer.

It localises to the cytoplasm. It catalyses the reaction tRNA(Ser) + L-serine + ATP = L-seryl-tRNA(Ser) + AMP + diphosphate + H(+). It carries out the reaction tRNA(Sec) + L-serine + ATP = L-seryl-tRNA(Sec) + AMP + diphosphate + H(+). Its pathway is aminoacyl-tRNA biosynthesis; selenocysteinyl-tRNA(Sec) biosynthesis; L-seryl-tRNA(Sec) from L-serine and tRNA(Sec): step 1/1. Its function is as follows. Catalyzes the attachment of serine to tRNA(Ser). Is also able to aminoacylate tRNA(Sec) with serine, to form the misacylated tRNA L-seryl-tRNA(Sec), which will be further converted into selenocysteinyl-tRNA(Sec). The sequence is that of Serine--tRNA ligase from Nautilia profundicola (strain ATCC BAA-1463 / DSM 18972 / AmH).